The following is a 188-amino-acid chain: uncharacterized protein (188 aa).

This sequence belongs to the isochorismatase family.

This is an uncharacterized protein from Escherichia coli O157:H7.